A 1498-amino-acid polypeptide reads, in one-letter code: Golgin subfamily A member 3 (1498 aa).

N-acetylmethionine is present on Met1. The interval 1–118 (MDGASAEQDG…GTSAEGSVRK (118 aa)) is disordered. Position 18 is a phosphoserine (Ser18). The span at 27–36 (PLKPPGPLVP) shows a compositional bias: pro residues. At Ser57 the chain carries Phosphoserine. The segment covering 71 to 81 (PTPPFPDPPSS) has biased composition (pro residues). Positions 121 to 141 (LQSLRLSLPMQETQLCSTDSP) are interaction with GOPC. 2 disordered regions span residues 166–195 (RVKR…MLNP) and 216–325 (SVPR…SAST). Positions 172–257 (ERSSQPATKT…DYRTEDSNAG (86 aa)) are golgi-targeting domain. 2 stretches are compositionally biased toward polar residues: residues 173–184 (RSSQPATKTRLF) and 269–291 (TKGS…SLSP). Ser272 is subject to Phosphoserine. The segment covering 315–324 (SDSSSYSSAS) has biased composition (low complexity). Phosphoserine is present on residues Ser385, Ser389, and Ser465. Positions 394 to 1459 (VSLESSAAET…ALTVHESLSS (1066 aa)) form a coiled coil. Residues 789 to 801 (KEELDRGARRLEE) show a composition bias toward basic and acidic residues. Disordered regions lie at residues 789–809 (KEEL…TSET), 974–993 (QKQK…KEMK), 1376–1400 (RGAA…PIKI), and 1440–1498 (DSLQ…GPGE). Ser983 carries the post-translational modification Phosphoserine. Basic and acidic residues predominate over residues 1376–1387 (RGAAKTRKEPKG). Residue Ser1392 is modified to Phosphoserine. The segment covering 1440–1452 (DSLQRQMEEHALT) has biased composition (basic and acidic residues).

As to quaternary structure, homodimer. Interacts with GOLGA7. Isoform 1 interacts with GOPC while isoform 3 does not. Post-translationally, cleaved by caspases in apoptotic cells. In terms of tissue distribution, expressed in all tissues tested. Expressed in liver, testis, lung, heart, salivary gland and kidney.

The protein localises to the cytoplasm. It localises to the golgi apparatus. It is found in the golgi stack membrane. Golgi auto-antigen; probably involved in maintaining Golgi structure. This chain is Golgin subfamily A member 3 (GOLGA3), found in Homo sapiens (Human).